Consider the following 38-residue polypeptide: Large ribosomal subunit protein bL36 (38 aa).

This sequence belongs to the bacterial ribosomal protein bL36 family.

In Mycoplasma mobile (strain ATCC 43663 / 163K / NCTC 11711) (Mesomycoplasma mobile), this protein is Large ribosomal subunit protein bL36.